A 107-amino-acid polypeptide reads, in one-letter code: Iron-binding protein IscA (107 aa).

Fe cation is bound by residues cysteine 35, cysteine 99, and cysteine 101.

The protein belongs to the HesB/IscA family. In terms of assembly, homodimer; may form tetramers and higher multimers. Fe cation is required as a cofactor.

In terms of biological role, is able to transfer iron-sulfur clusters to apo-ferredoxin. Multiple cycles of [2Fe2S] cluster formation and transfer are observed, suggesting that IscA acts catalytically. Recruits intracellular free iron so as to provide iron for the assembly of transient iron-sulfur cluster in IscU in the presence of IscS, L-cysteine and the thioredoxin reductase system TrxA/TrxB. The polypeptide is Iron-binding protein IscA (Xenorhabdus nematophila (strain ATCC 19061 / DSM 3370 / CCUG 14189 / LMG 1036 / NCIMB 9965 / AN6)).